Reading from the N-terminus, the 314-residue chain is Ribosomal RNA small subunit methyltransferase H (314 aa).

S-adenosyl-L-methionine contacts are provided by residues 36-38 (GGH), Asp56, Phe81, Asp103, and Gln110.

Belongs to the methyltransferase superfamily. RsmH family.

It localises to the cytoplasm. It catalyses the reaction cytidine(1402) in 16S rRNA + S-adenosyl-L-methionine = N(4)-methylcytidine(1402) in 16S rRNA + S-adenosyl-L-homocysteine + H(+). In terms of biological role, specifically methylates the N4 position of cytidine in position 1402 (C1402) of 16S rRNA. The chain is Ribosomal RNA small subunit methyltransferase H from Shewanella sediminis (strain HAW-EB3).